We begin with the raw amino-acid sequence, 109 residues long: N-alpha-acetyltransferase 38, NatC auxiliary subunit (109 aa).

One can recognise a Sm domain in the interval 23–101 (LARCKLENLL…VVSIEVETES (79 aa)).

The protein belongs to the snRNP Sm proteins family. As to quaternary structure, component of the N-terminal acetyltransferase C (NatC) complex.

It localises to the cytoplasm. The protein localises to the nucleus. Functionally, auxillary component of the N-terminal acetyltransferase C (NatC) complex which catalyzes acetylation of N-terminal methionine residues. N-terminal acetylation protects proteins from ubiquitination and degradation by the N-end rule pathway. This chain is N-alpha-acetyltransferase 38, NatC auxiliary subunit (naa38), found in Danio rerio (Zebrafish).